A 305-amino-acid chain; its full sequence is uncharacterized protein (305 aa).

A run of 10 helical transmembrane segments spans residues 4 to 24 (LNIYIMLLGFSIFTGATFNLA), 38 to 58 (AWRFGLAAAVMLIILIFTEGI), 67 to 87 (AVSYIVLGIIGIFGFNALFFV), 95 to 115 (VNGALIMGLNPLLTAILARII), 125 to 145 (VLGIFFAFIGVLLVITQGSIE), 152 to 172 (ISGGDLIIFTGNVCWALYGVL), 183 to 203 (LSTTTYTMVIGAVSLIVVSLF), 215 to 235 (IGVWGAIAFMAFFTSVLGYLW), 250 to 270 (LFFNLVPVVTMIISFAVGTPI), and 272 to 292 (VFQVIGAVLVILGVLTASGVI). EamA domains follow at residues 15 to 140 (IFTG…LVIT) and 164 to 290 (VCWA…TASG).

The protein belongs to the EamA transporter family.

Its subcellular location is the cell membrane. This is an uncharacterized protein from Bacillus subtilis (strain 168).